The sequence spans 426 residues: Enolase (426 aa).

Q163 contributes to the (2R)-2-phosphoglycerate binding site. Residue E205 is the Proton donor of the active site. D242, E286, and D313 together coordinate Mg(2+). The (2R)-2-phosphoglycerate site is built by K338, R367, S368, and K389. Residue K338 is the Proton acceptor of the active site.

This sequence belongs to the enolase family. Mg(2+) serves as cofactor.

The protein localises to the cytoplasm. It localises to the secreted. Its subcellular location is the cell surface. It carries out the reaction (2R)-2-phosphoglycerate = phosphoenolpyruvate + H2O. The protein operates within carbohydrate degradation; glycolysis; pyruvate from D-glyceraldehyde 3-phosphate: step 4/5. In terms of biological role, catalyzes the reversible conversion of 2-phosphoglycerate (2-PG) into phosphoenolpyruvate (PEP). It is essential for the degradation of carbohydrates via glycolysis. The protein is Enolase of Helicobacter pylori (strain Shi470).